Here is a 24-residue protein sequence, read N- to C-terminus: Acidic phospholipase A2 4 (24 aa).

The protein belongs to the phospholipase A2 family. Group II subfamily. The cofactor is Ca(2+). In terms of tissue distribution, expressed by the venom gland.

The protein localises to the secreted. The enzyme catalyses a 1,2-diacyl-sn-glycero-3-phosphocholine + H2O = a 1-acyl-sn-glycero-3-phosphocholine + a fatty acid + H(+). PLA2 catalyzes the calcium-dependent hydrolysis of the 2-acyl groups in 3-sn-phosphoglycerides. In Trimeresurus stejnegeri (Chinese green tree viper), this protein is Acidic phospholipase A2 4.